Consider the following 174-residue polypeptide: SUSHI domain-containing protein E3 (174 aa).

The first 20 residues, 1-20 (MATEVQFACALVVLLGCGYA), serve as a signal peptide directing secretion. One can recognise a Sushi domain in the interval 35–97 (QNCTTYPSIE…WTNGPPSCVK (63 aa)). 2 disulfide bridges follow: cysteine 37–cysteine 78 and cysteine 64–cysteine 95. Residues 108-127 (STSTTPVTTGTFPDPQNTTH) are compositionally biased toward low complexity. The disordered stretch occupies residues 108–133 (STSTTPVTTGTFPDPQNTTHPTHHTV). Residues 145–165 (FGYTPWAIITLVVIILLVVWI) traverse the membrane as a helical segment.

The protein resides in the host membrane. In Equine herpesvirus 2 (strain 86/87) (EHV-2), this protein is SUSHI domain-containing protein E3 (E3).